The sequence spans 102 residues: NADH-quinone oxidoreductase subunit K (102 aa).

Helical transmembrane passes span 5–25, 31–51, and 66–86; these read IMHYLIVSALMFTIGIAGIFL, IIILMSIELILLSVNLNFVAF, and FILTVAAAEAAIGLAILVVFF.

This sequence belongs to the complex I subunit 4L family. In terms of assembly, NDH-1 is composed of 14 different subunits. Subunits NuoA, H, J, K, L, M, N constitute the membrane sector of the complex.

It localises to the cell inner membrane. The catalysed reaction is a quinone + NADH + 5 H(+)(in) = a quinol + NAD(+) + 4 H(+)(out). Its function is as follows. NDH-1 shuttles electrons from NADH, via FMN and iron-sulfur (Fe-S) centers, to quinones in the respiratory chain. The immediate electron acceptor for the enzyme in this species is believed to be ubiquinone. Couples the redox reaction to proton translocation (for every two electrons transferred, four hydrogen ions are translocated across the cytoplasmic membrane), and thus conserves the redox energy in a proton gradient. The protein is NADH-quinone oxidoreductase subunit K of Bartonella henselae (strain ATCC 49882 / DSM 28221 / CCUG 30454 / Houston 1) (Rochalimaea henselae).